Reading from the N-terminus, the 775-residue chain is ADP-ribosylation factor GTPase-activating protein AGD4 (775 aa).

One can recognise a BAR domain in the interval 2–226 (ATFINLEDSP…IHQILTYAQQ (225 aa)). The PH domain occupies 288 to 421 (EVIKQGYLLK…WVNKITKAIG (134 aa)). The Arf-GAP domain maps to 467 to 603 (DDVSTILRGL…ALVIKDESEA (137 aa)). Residues 482-505 (CAECNAPEPDWASLNLGVLLCIQC) form a C4-type zinc finger. ANK repeat units follow at residues 682–711 (QGCS…DLNI) and 715–744 (HGRT…RPSI).

Expressed in roots, hypocotyls, cotyledons, leaf and shoot apical meristems and siliques.

Its function is as follows. Probable GTPase-activating protein. In Arabidopsis thaliana (Mouse-ear cress), this protein is ADP-ribosylation factor GTPase-activating protein AGD4 (AGD4).